We begin with the raw amino-acid sequence, 205 residues long: Urease accessory protein UreG (205 aa).

14–21 (GPVGSGKT) contributes to the GTP binding site.

Homodimer. UreD, UreF and UreG form a complex that acts as a GTP-hydrolysis-dependent molecular chaperone, activating the urease apoprotein by helping to assemble the nickel containing metallocenter of UreC. The UreE protein probably delivers the nickel.

It is found in the cytoplasm. With respect to regulation, activation of apourease within the UreDFG-apoprotein complex is inhibited by zinc, copper and cobalt. Facilitates the functional incorporation of the urease nickel metallocenter. This process requires GTP hydrolysis, probably effectuated by UreG. The sequence is that of Urease accessory protein UreG from Klebsiella aerogenes (Enterobacter aerogenes).